The chain runs to 152 residues: Histone H2B.9 (152 aa).

Composition is skewed to basic and acidic residues over residues 1-16 (MAPK…KPAE) and 34-52 (EKRL…EGKK). Positions 1-59 (MAPKAEKKPAAKKPAEEEPAAEKAPAAGKKPKAEKRLPAGKGEKGGAGEGKKAGRKKGK) are disordered. Lys-7 and Lys-35 each carry N6-acetyllysine. Residue Lys-148 forms a Glycyl lysine isopeptide (Lys-Gly) (interchain with G-Cter in ubiquitin) linkage.

Belongs to the histone H2B family. As to quaternary structure, the nucleosome is a histone octamer containing two molecules each of H2A, H2B, H3 and H4 assembled in one H3-H4 heterotetramer and two H2A-H2B heterodimers. The octamer wraps approximately 147 bp of DNA. Can be acetylated to form H2BK6ac and H2BK33ac. Post-translationally, monoubiquitinated by BRE1 to form H2BK143ub1 and deubiquitinated by UBP26. Required for heterochromatic histone H3 di- and trimethylation at H3K4me. May give a specific tag for epigenetic transcriptional activation.

The protein localises to the nucleus. Its subcellular location is the chromosome. Its function is as follows. Core component of nucleosome. Nucleosomes wrap and compact DNA into chromatin, limiting DNA accessibility to the cellular machineries which require DNA as a template. Histones thereby play a central role in transcription regulation, DNA repair, DNA replication and chromosomal stability. DNA accessibility is regulated via a complex set of post-translational modifications of histones, also called histone code, and nucleosome remodeling. This Oryza sativa subsp. indica (Rice) protein is Histone H2B.9 (H2B.9).